Consider the following 219-residue polypeptide: Beta-crystallin B2 (219 aa).

At alanine 2 the chain carries N-acetylalanine. The tract at residues 2–16 is N-terminal arm; the sequence is ASEHQMPASKQQPAS. 2 Beta/gamma crystallin 'Greek key' domains span residues 17 to 56 and 57 to 101; these read PNIA…LVHS and GPWV…RPIK. The segment at 102-120 is connecting peptide; that stretch reads VVRAPRQPLPTRQTKDSQE. 2 consecutive Beta/gamma crystallin 'Greek key' domains span residues 121-162 and 163-205; these read HKIV…RVQS and GTWV…RRIR. The interval 207-219 is C-terminal arm; sequence MQWHQRGAYHPSN.

Belongs to the beta/gamma-crystallin family. Homo/heterodimer, or complexes of higher-order. The structure of beta-crystallin oligomers seems to be stabilized through interactions between the N-terminal arms.

Its function is as follows. Crystallins are the dominant structural components of the vertebrate eye lens. The chain is Beta-crystallin B2 (CRYBB2) from Gallus gallus (Chicken).